The chain runs to 241 residues: Large ribosomal subunit protein uL1 (241 aa).

It belongs to the universal ribosomal protein uL1 family. Part of the 50S ribosomal subunit.

Binds directly to 23S rRNA. The L1 stalk is quite mobile in the ribosome, and is involved in E site tRNA release. Its function is as follows. Protein L1 is also a translational repressor protein, it controls the translation of the L11 operon by binding to its mRNA. The protein is Large ribosomal subunit protein uL1 of Thermomicrobium roseum (strain ATCC 27502 / DSM 5159 / P-2).